We begin with the raw amino-acid sequence, 307 residues long: N-acetylmuramic acid 6-phosphate etherase (307 aa).

The SIS domain maps to 62–225; that stretch reads IVLAFQKGAR…TTASMIRIGK (164 aa). Glu90 serves as the catalytic Proton donor. Glu121 is an active-site residue.

This sequence belongs to the GCKR-like family. MurNAc-6-P etherase subfamily. Homodimer.

The catalysed reaction is N-acetyl-D-muramate 6-phosphate + H2O = N-acetyl-D-glucosamine 6-phosphate + (R)-lactate. Its pathway is amino-sugar metabolism; 1,6-anhydro-N-acetylmuramate degradation. It functions in the pathway amino-sugar metabolism; N-acetylmuramate degradation. The protein operates within cell wall biogenesis; peptidoglycan recycling. In terms of biological role, specifically catalyzes the cleavage of the D-lactyl ether substituent of MurNAc 6-phosphate, producing GlcNAc 6-phosphate and D-lactate. Together with AnmK, is also required for the utilization of anhydro-N-acetylmuramic acid (anhMurNAc) either imported from the medium or derived from its own cell wall murein, and thus plays a role in cell wall recycling. The chain is N-acetylmuramic acid 6-phosphate etherase from Mesorhizobium japonicum (strain LMG 29417 / CECT 9101 / MAFF 303099) (Mesorhizobium loti (strain MAFF 303099)).